A 314-amino-acid polypeptide reads, in one-letter code: RNA 2',3'-cyclic phosphodiesterase (314 aa).

Residue histidine 43 is the Proton donor of the active site. Short sequence motifs (HXTX) lie at residues 43-46 (HITL) and 129-132 (HITI). Histidine 129 serves as the catalytic Proton acceptor.

It belongs to the 2H phosphoesterase superfamily. ThpR family.

It catalyses the reaction a 3'-end 2',3'-cyclophospho-ribonucleotide-RNA + H2O = a 3'-end 2'-phospho-ribonucleotide-RNA + H(+). Its function is as follows. Hydrolyzes RNA 2',3'-cyclic phosphodiester to an RNA 2'-phosphomonoester. This chain is RNA 2',3'-cyclic phosphodiesterase, found in Geobacillus stearothermophilus (Bacillus stearothermophilus).